The primary structure comprises 472 residues: Adenosylhomocysteinase (472 aa).

Residues Thr64, Asp138, and Glu198 each contribute to the substrate site. 199 to 201 is a binding site for NAD(+); that stretch reads TTT. Residues Lys228 and Asp232 each coordinate substrate. Residues Asn233, 262–267, Glu285, Asn320, 341–343, and Asn386 each bind NAD(+); these read GFGDVG and IGH.

It belongs to the adenosylhomocysteinase family. NAD(+) is required as a cofactor.

The protein localises to the cytoplasm. The catalysed reaction is S-adenosyl-L-homocysteine + H2O = L-homocysteine + adenosine. Its pathway is amino-acid biosynthesis; L-homocysteine biosynthesis; L-homocysteine from S-adenosyl-L-homocysteine: step 1/1. May play a key role in the regulation of the intracellular concentration of adenosylhomocysteine. This Prochlorococcus marinus (strain MIT 9301) protein is Adenosylhomocysteinase.